The following is a 555-amino-acid chain: Transcriptional adapter 2b (555 aa).

The ZZ-type zinc finger occupies 8-63 (FTKYNCTNCQDDIQGIRVHCAECENFDLCLQCFAAGAEIGAHQNNHSYQFMDTGTS). Residues Cys-13, Cys-16, Cys-27, Cys-30, Cys-36, Cys-39, His-49, and His-53 each contribute to the Zn(2+) site. Residues 69–121 (RGKGAWTAREEIRLLDAIEQYGFGNWEDISKHIETKSAEDAKEEYVNKFVNGT) form the SANT domain. Residues 318–372 (THRSTGPYGHGKTDHTHTSNGSHRPPSSSLHSPQPNLRKVEMSSGGEASSNSIAP) are disordered. The segment covering 339–352 (SHRPPSSSLHSPQP) has biased composition (low complexity). Residues 363 to 372 (GEASSNSIAP) are compositionally biased toward polar residues.

Component of histone acetyltransferase complexes containing Gcn5 and Ada3. As to quaternary structure, can heterooligomerize with Isoform A. Component of the Spt-Ada-Gcn5 acetyltransferase (SAGA) complex consisting of Ada1, Ada2b (Isoform B), Ada3, wda, Saf6, Spt3, Spt7, Spt20, Taf9, Taf10b, Taf12, Nipped-A/Tra1, Sf3b3, Sf3b5, not/nonstop, Sgf11, Sgf29, e(y)2, Atxn7 and Gcn5. Taf5 and Taf10, which has partially redundant properties with Taf10b, may also be part of this complex. Interacts (via C-terminus) with Spt3 and Taf12; the interactions are direct. Interacts with Ada3; the interaction is probably direct. May also interact directly with Spt7 and Gcn5. Interacts with p53. In terms of assembly, can heterooligomerize with Isoform B. Component of the Chiffon histone acetyltransferase (CHAT) complex consisting of Ada3, Sgf29, Gcn5, chif/chiffon and Ada2b (Isoform A). Interacts (via N-terminus) with Gcn5 and Ada3; the interaction is direct. Can interact directly with Spt7 in vitro but in vivo this interaction is not stable probably due to the absence of other SAGA components. Interacts with p53. In terms of tissue distribution, expressed in nurse cells of stage 10 egg chambers and transcripts are dumped into the oocyte when nurse cells degenerate at late oogenesis.

The protein localises to the nucleus. Its function is as follows. Component of several Gcn5-containing histone acetyltransferase complexes that regulate nucleosome organization; involved in acetylation of histone H3, particularly on Lys-10 (H3K9ac) and Lys-15 (H3K14ac). Regulates the transcription of a subset of genes during development; affects recruitment of RNA polymerase II. May be involved in the function of some acidic activation domains, which activate transcription at distant sites. Involved in the p53-dependent apoptosis pathway response to DNA damage by genotoxic agents. Component of the SAGA histone acetyltransferase complex, which predominantly acetylates histone H3. In terms of biological role, component of the CHAT histone acetyltransferase complex, which predominantly acetylates histone H3. The protein is Transcriptional adapter 2b of Drosophila melanogaster (Fruit fly).